The sequence spans 478 residues: Antiviral innate immune response effector IFIT1 (478 aa).

TPR repeat units follow at residues Val-52 to Glu-85, Leu-95 to Leu-128, Ile-141 to Asn-174, Ile-183 to Asn-216, Tyr-218 to Ser-249, and Thr-251 to Ser-284. Residue Trp-147 coordinates mRNA. Gly-190 lines the RNA pocket. RNA-binding residues include Lys-259, His-289, Gln-290, and Lys-336. TPR repeat units follow at residues Ala-305 to Phe-339, Glu-340 to Val-373, Gln-378 to Ser-412, and Leu-437 to Phe-470.

It belongs to the IFIT family. Component of an interferon-dependent multiprotein complex, at least composed of IFIT1, IFIT2 and IFIT3. Interacts (via TPR repeats 1-4) with RPL15. Interacts with STING1/MITA; could disrupt STING1 interaction with MAVS or TBK1, acting as a negative-feedback regulator of virus-triggered signaling. Interacts with EIF3E; this could be an alternative way to inhibit translation. In terms of processing, phosphorylated. Post-translationally, ISGylated.

It localises to the cytoplasm. Plays a key role in the innate immune response as part of an interferon-dependent multiprotein complex, recognizing and sequestering viral RNAs that lack host-specific 2'-O-methylation at their 5' cap. By distinguishing these RNAs from host mRNAs, inhibits their translation by competing with the translation initiation factor eIF4E. Could also prevent viral replication through its interaction with DNA replication origin-binding protein E1 of several viruses. Causes the translocation of E1 from the nucleus to the cytoplasm and can also inhibit its helicase activity in vitro. Exhibits antiviral activity against many viruses from the Flaviviridae (West Nile virus, Dengue virus, hepatitis C virus), Coronaviridae (human 229E coronavirus, SARS-CoV-2 and SARS-CoV), Poxviridae (vaccinia virus) and Togaviridae (Sindbis virus) families. This Homo sapiens (Human) protein is Antiviral innate immune response effector IFIT1.